A 253-amino-acid chain; its full sequence is Imidazole glycerol phosphate synthase subunit HisF (253 aa).

Catalysis depends on residues Asp11 and Asp130.

Belongs to the HisA/HisF family. In terms of assembly, heterodimer of HisH and HisF.

The protein localises to the cytoplasm. The catalysed reaction is 5-[(5-phospho-1-deoxy-D-ribulos-1-ylimino)methylamino]-1-(5-phospho-beta-D-ribosyl)imidazole-4-carboxamide + L-glutamine = D-erythro-1-(imidazol-4-yl)glycerol 3-phosphate + 5-amino-1-(5-phospho-beta-D-ribosyl)imidazole-4-carboxamide + L-glutamate + H(+). The protein operates within amino-acid biosynthesis; L-histidine biosynthesis; L-histidine from 5-phospho-alpha-D-ribose 1-diphosphate: step 5/9. In terms of biological role, IGPS catalyzes the conversion of PRFAR and glutamine to IGP, AICAR and glutamate. The HisF subunit catalyzes the cyclization activity that produces IGP and AICAR from PRFAR using the ammonia provided by the HisH subunit. This is Imidazole glycerol phosphate synthase subunit HisF from Geobacter metallireducens (strain ATCC 53774 / DSM 7210 / GS-15).